The chain runs to 579 residues: Transcription factor MTB2 (579 aa).

The disordered stretch occupies residues 373–439 (GGMQIDFTNS…PLNHVEAERQ (67 aa)). The segment covering 382 to 392 (SRPVVSPVPTV) has biased composition (low complexity). Basic and acidic residues-rich tracts occupy residues 393 to 415 (ESEH…DERR) and 425 to 439 (NGRE…AERQ). The segment at 428–441 (EEPLNHVEAERQRR) is basic motif; degenerate. The bHLH domain maps to 428–477 (EEPLNHVEAERQRREKLNQRFYALRAVVPNISKMDKASLLGDAIAHITDM). Residues 442–477 (EKLNQRFYALRAVVPNISKMDKASLLGDAIAHITDM) form a helix-loop-helix motif region.

The protein localises to the nucleus. In terms of biological role, transcription factor that negatively regulates jasmonate (JA) signaling. Negatively regulates JA-dependent response to wounding, JA-induced expression of defense genes, JA-dependent responses against herbivorous insects, and JA-dependent resistance against Botrytis cinerea infection. Plays a positive role in resistance against the bacterial pathogen Pseudomonas syringae pv tomato DC3000. This Solanum lycopersicum (Tomato) protein is Transcription factor MTB2.